We begin with the raw amino-acid sequence, 467 residues long: Chromosomal replication initiator protein DnaA (467 aa).

A domain I, interacts with DnaA modulators region spans residues 1 to 90 (MSLSLWQQCL…KPVTQTPQAA (90 aa)). Residues 91–130 (VTSNVAAPAQVAQTQPQRAAPSTRSGWDNVPAPAEPTYRS) are domain II. Residues 98–111 (PAQVAQTQPQRAAP) show a composition bias toward low complexity. The disordered stretch occupies residues 98–119 (PAQVAQTQPQRAAPSTRSGWDN). The domain III, AAA+ region stretch occupies residues 131–347 (NVNVKHTFDN…GALNRVIANA (217 aa)). ATP contacts are provided by Gly-175, Gly-177, Lys-178, and Thr-179. Residues 348–467 (NFTGRAITID…FSNLIRTLSS (120 aa)) form a domain IV, binds dsDNA region.

It belongs to the DnaA family. In terms of assembly, oligomerizes as a right-handed, spiral filament on DNA at oriC.

The protein localises to the cytoplasm. In terms of biological role, plays an essential role in the initiation and regulation of chromosomal replication. ATP-DnaA binds to the origin of replication (oriC) to initiate formation of the DNA replication initiation complex once per cell cycle. Binds the DnaA box (a 9 base pair repeat at the origin) and separates the double-stranded (ds)DNA. Forms a right-handed helical filament on oriC DNA; dsDNA binds to the exterior of the filament while single-stranded (ss)DNA is stabiized in the filament's interior. The ATP-DnaA-oriC complex binds and stabilizes one strand of the AT-rich DNA unwinding element (DUE), permitting loading of DNA polymerase. After initiation quickly degrades to an ADP-DnaA complex that is not apt for DNA replication. Binds acidic phospholipids. This is Chromosomal replication initiator protein DnaA from Shigella boydii serotype 4 (strain Sb227).